A 257-amino-acid chain; its full sequence is Phycoerythrobilin:ferredoxin oxidoreductase (257 aa).

This sequence belongs to the HY2 family.

The catalysed reaction is (3Z)-phycoerythrobilin + oxidized 2[4Fe-4S]-[ferredoxin] = 15,16-dihydrobiliverdin + reduced 2[4Fe-4S]-[ferredoxin] + 2 H(+). Functionally, catalyzes the two-electron reduction of the C2 and C3(1) diene system of 15,16-dihydrobiliverdin. This chain is Phycoerythrobilin:ferredoxin oxidoreductase, found in Synechococcus sp. (strain CC9902).